The primary structure comprises 135 residues: ATP synthase epsilon chain (135 aa).

It belongs to the ATPase epsilon chain family. F-type ATPases have 2 components, CF(1) - the catalytic core - and CF(0) - the membrane proton channel. CF(1) has five subunits: alpha(3), beta(3), gamma(1), delta(1), epsilon(1). CF(0) has three main subunits: a, b and c.

It is found in the cell inner membrane. In terms of biological role, produces ATP from ADP in the presence of a proton gradient across the membrane. The protein is ATP synthase epsilon chain of Brucella abortus (strain S19).